A 591-amino-acid chain; its full sequence is Phenylalanine--tRNA ligase beta subunit (591 aa).

Positions 304–380 (LSYREMTVTT…VAFGYNNLIT (77 aa)) constitute a B5 domain. Mg(2+)-binding residues include Asp358, Asp364, Glu367, and Asp368.

This sequence belongs to the phenylalanyl-tRNA synthetase beta subunit family. Type 2 subfamily. Tetramer of two alpha and two beta subunits. It depends on Mg(2+) as a cofactor.

Its subcellular location is the cytoplasm. It catalyses the reaction tRNA(Phe) + L-phenylalanine + ATP = L-phenylalanyl-tRNA(Phe) + AMP + diphosphate + H(+). The chain is Phenylalanine--tRNA ligase beta subunit from Caenorhabditis elegans.